Consider the following 895-residue polypeptide: Receptor-like protein kinase FERONIA (895 aa).

Positions 1-27 are cleaved as a signal peptide; that stretch reads MKITEGRFRLSLLLLLLLISAATLISA. At 28–447 the chain is on the extracellular side; it reads ADYSPTEKIL…TTRKSKSNTA (420 aa). N-linked (GlcNAc...) asparagine glycosylation is found at Asn46, Asn124, Asn142, Asn171, Asn219, Asn269, Asn305, Asn330, Asn345, and Asn410. A helical membrane pass occupies residues 448-468; sequence IIAGAASGAVVLALIIGFCVF. The Cytoplasmic segment spans residues 469–895; it reads GAYRRRKRGD…FSQIMNPKGR (427 aa). Residues 536 to 810 enclose the Protein kinase domain; it reads FDESRVLGVG…GDVLWNLEFA (275 aa). Residues 542-550 and Lys565 contribute to the ATP site; that span reads LGVGGFGKV. Asp661 functions as the Proton acceptor in the catalytic mechanism. The interval 844 to 895 is disordered; sequence NDKSSDVYEGNVTDSRSSGIDMSIGGRSLASEDSDGLTPSAVFSQIMNPKGR. Residues Ser858, Ser866, Ser871, and Ser874 each carry the phosphoserine modification. The segment covering 884–895 has biased composition (polar residues); the sequence is AVFSQIMNPKGR.

The protein belongs to the protein kinase superfamily. Ser/Thr protein kinase family. As to quaternary structure, interacts with ROPGEF1. Interacts with RALF1; triggering phosphorylation status and subsequent activation. Interacts with LRE and LLG1. Interacts, via its extracellular domain, with FERONIA at the synergid cell surface. Autophosphorylated. Post-translationally, phosphorylated at Ser-858, Ser-871 and Ser-874 upon activation by RALF1. As to expression, expressed in leaves, buds, flowers, siliques, young ovules primordia, and young anthers with immature pollen, but not detected in mature pollen. Highest expression in the synergid cells of the female gametophyte.

It localises to the cell membrane. It catalyses the reaction L-seryl-[protein] + ATP = O-phospho-L-seryl-[protein] + ADP + H(+). The enzyme catalyses L-threonyl-[protein] + ATP = O-phospho-L-threonyl-[protein] + ADP + H(+). Its function is as follows. Receptor-like protein kinase that mediates the female control of male gamete delivery during fertilization, including growth cessation of compatible pollen tubes ensuring a reproductive isolation barriers, by regulating MLO7 subcellular polarization upon pollen tube perception in the female gametophyte synergids. Required for cell elongation during vegetative growth, mostly in a brassinosteroids- (BR-) independent manner. Acts as an upstream regulator for the Rac/Rop-signaling pathway that controls ROS-mediated root hair development. Seems to regulate a cross-talk between brassinosteroids and ethylene signaling pathways during hypocotyl elongation. Negative regulator of brassinosteroid response in light-grown hypocotyls, but required for brassinosteroid response in etiolated seedlings. Mediates sensitivity to powdery mildew (e.g. Golovinomyces orontii). Positive regulator of auxin-promoted growth that represses the abscisic acid (ABA) signaling via the activation of ABI2 phosphatase. Required for RALF1-mediated extracellular alkalinization in a signaling pathway preventing cell expansion. The protein is Receptor-like protein kinase FERONIA of Arabidopsis thaliana (Mouse-ear cress).